The sequence spans 700 residues: Phosphoribosylformylglycinamidine synthase subunit PurL (700 aa).

Histidine 34 is a catalytic residue. Tyrosine 37 contributes to the ATP binding site. Residue glutamate 79 participates in Mg(2+) binding. Residues 80 to 83 and arginine 102 contribute to the substrate site; that span reads SHNH. Histidine 81 (proton acceptor) is an active-site residue. Residue aspartate 103 participates in Mg(2+) binding. Glutamine 227 is a substrate binding site. Residue aspartate 255 coordinates Mg(2+). Residue 299–301 coordinates substrate; it reads ESQ. ATP contacts are provided by aspartate 476 and glycine 513. Mg(2+) is bound at residue asparagine 514. A substrate-binding site is contributed by serine 516.

Belongs to the FGAMS family. As to quaternary structure, monomer. Part of the FGAM synthase complex composed of 1 PurL, 1 PurQ and 2 PurS subunits.

The protein resides in the cytoplasm. The catalysed reaction is N(2)-formyl-N(1)-(5-phospho-beta-D-ribosyl)glycinamide + L-glutamine + ATP + H2O = 2-formamido-N(1)-(5-O-phospho-beta-D-ribosyl)acetamidine + L-glutamate + ADP + phosphate + H(+). It functions in the pathway purine metabolism; IMP biosynthesis via de novo pathway; 5-amino-1-(5-phospho-D-ribosyl)imidazole from N(2)-formyl-N(1)-(5-phospho-D-ribosyl)glycinamide: step 1/2. Functionally, part of the phosphoribosylformylglycinamidine synthase complex involved in the purines biosynthetic pathway. Catalyzes the ATP-dependent conversion of formylglycinamide ribonucleotide (FGAR) and glutamine to yield formylglycinamidine ribonucleotide (FGAM) and glutamate. The FGAM synthase complex is composed of three subunits. PurQ produces an ammonia molecule by converting glutamine to glutamate. PurL transfers the ammonia molecule to FGAR to form FGAM in an ATP-dependent manner. PurS interacts with PurQ and PurL and is thought to assist in the transfer of the ammonia molecule from PurQ to PurL. This is Phosphoribosylformylglycinamidine synthase subunit PurL from Halobacterium salinarum (strain ATCC 29341 / DSM 671 / R1).